Consider the following 144-residue polypeptide: uncharacterized protein (144 aa).

The HTH lysR-type domain maps to 1 to 58 (MDLASLNAFIAVAETGSFSEAGERLHLTQPAVSKRIAALEQQLQVRLFDRLGREVRLT). A DNA-binding region (H-T-H motif) is located at residues 18-38 (FSEAGERLHLTQPAVSKRIAA).

The protein belongs to the LysR transcriptional regulatory family.

This is an uncharacterized protein from Azotobacter vinelandii.